The chain runs to 462 residues: Envelope glycoprotein C (462 aa).

Positions 1-23 (MAPRGSGRLEAVVFAVMVLFCSG) are cleaved as a signal peptide. The Virion surface portion of the chain corresponds to 24–433 (TSTATTAAAP…NMPLRQGRPM (410 aa)). Residues 29–38 (TAAAPASSPG) are compositionally biased toward low complexity. A disordered region spans residues 29–57 (TAAAPASSPGIQTSSPAPGTGSTRLPGTR). Over residues 39–57 (IQTSSPAPGTGSTRLPGTR) the composition is skewed to polar residues. Asparagine 66, asparagine 94, asparagine 136, asparagine 173, asparagine 249, and asparagine 417 each carry an N-linked (GlcNAc...) asparagine; by host glycan. Residues 434–454 (LICLAVVMGLFVLGSFLAVVI) form a helical membrane-spanning segment. Topologically, residues 455 to 462 (SACLWGSG) are cytoplasmic.

It belongs to the herpesviridae glycoprotein C family.

Its subcellular location is the virion membrane. In Psittacid herpesvirus 1 (isolate Amazon parrot/-/97-0001/1997) (PsHV-1), this protein is Envelope glycoprotein C (gC).